Consider the following 132-residue polypeptide: Small ribosomal subunit protein uS8 (132 aa).

It belongs to the universal ribosomal protein uS8 family. In terms of assembly, part of the 30S ribosomal subunit. Contacts proteins S5 and S12.

In terms of biological role, one of the primary rRNA binding proteins, it binds directly to 16S rRNA central domain where it helps coordinate assembly of the platform of the 30S subunit. The sequence is that of Small ribosomal subunit protein uS8 from Latilactobacillus sakei subsp. sakei (strain 23K) (Lactobacillus sakei subsp. sakei).